Reading from the N-terminus, the 2873-residue chain is Fibrillin-1 (2873 aa).

Positions 1–24 are cleaved as a signal peptide; it reads MRRGGLLEVALAFALLLESYTSHG. Positions 25 to 44 are excised as a propeptide; it reads ADANLEAGSLKETRANRAKR. The segment at 45-81 is fibrillin unique N-terminal (FUN) domain; it reads RGGGGHDALKGPNVCGSRYNAYCCPGWKTLPGGNQCI. Residues 45–452 are N-terminal domain; that stretch reads RGGGGHDALK…PPRVLPFNVT (408 aa). 11 disulfide bridges follow: cysteine 59–cysteine 68, cysteine 67–cysteine 80, cysteine 85–cysteine 94, cysteine 89–cysteine 100, cysteine 102–cysteine 111, cysteine 119–cysteine 129, cysteine 123–cysteine 134, cysteine 136–cysteine 145, cysteine 150–cysteine 160, cysteine 154–cysteine 166, and cysteine 168–cysteine 177. EGF-like domains are found at residues 81–112, 115–146, and 147–178; these read IVPI…PSCG, SIQH…THCG, and QPVC…PQCE. The tract at residues 119–329 is interaction with MFAP4; sequence CSIRCMNGGS…YTSPDGTRCV (211 aa). The 53-residue stretch at 184 to 236 folds into the TB 1 domain; it reads GPCFTVVSNQMCQGQLSGIVCTKTLCCATVGRAWGHPCEMCPAQPHPCRRGFI. The interval 195–221 is hybrid domain 1; it reads CQGQLSGIVCTKTLCCATVGRAWGHPC. In terms of domain architecture, EGF-like 4; calcium-binding spans 246 to 287; that stretch reads DVDECQAIPGMCQGGNCINTVGSFECKCPAGHKFNEVSQKCE. Intrachain disulfides connect cysteine 250-cysteine 262, cysteine 257-cysteine 271, cysteine 273-cysteine 286, cysteine 292-cysteine 304, cysteine 299-cysteine 313, and cysteine 315-cysteine 328. Serine 268 carries an O-linked (Glc) serine glycan. An EGF-like 5; calcium-binding domain is found at 288 to 329; it reads DIDECSTIPGVCDGGECTNTVSSYFCKCPPGFYTSPDGTRCV. The TB 2 domain maps to 334–389; the sequence is GYCYTALANGRCSNQLPQSITKMQCCCDLGRCWSPGVTVAPEMCPIRSTEDFNKLC. A glycan (N-linked (GlcNAc...) asparagine) is linked at asparagine 450. Residues 451-491 enclose the EGF-like 6 domain; sequence VTDYCQLVRYLCQNGRCIPTPGSYRCECNKGFQLDIRGECI. Disulfide bonds link cysteine 455/cysteine 467, cysteine 462/cysteine 476, cysteine 478/cysteine 490, cysteine 496/cysteine 506, cysteine 501/cysteine 515, cysteine 517/cysteine 530, cysteine 536/cysteine 548, cysteine 543/cysteine 557, cysteine 559/cysteine 572, cysteine 578/cysteine 589, cysteine 584/cysteine 598, cysteine 600/cysteine 613, cysteine 619/cysteine 630, cysteine 625/cysteine 639, and cysteine 641/cysteine 654. A glycan (O-linked (Glc) serine) is linked at serine 473. In terms of domain architecture, EGF-like 7; calcium-binding spans 492-531; sequence DVDECEKNPCTGGECINNQGSYTCHCRAGYQSTLTRTECR. Serine 512 carries O-linked (Glc) serine glycosylation. Residues 532–573 form the EGF-like 8; calcium-binding domain; sequence DIDECLQNGRICNNGRCINTDGSFHCVCNAGFHVTRDGKNCE. An EGF-like 9; calcium-binding domain is found at 574–614; that stretch reads DMDECSIRNMCLNGMCINEDGSFKCICKPGFQLASDGRYCK. Residues 615-655 form the EGF-like 10; calcium-binding domain; that stretch reads DINECETPGICMNGRCVNTDGSYRCECFPGLAVGLDGRVCV. In terms of domain architecture, TB 3 spans 661–713; the sequence is STCYGGYRRGQCVKPLFGAVTKSECCCASTEYAFGEPCQPCPAQNSAEYQALC. In terms of domain architecture, EGF-like 11; calcium-binding spans 725–766; sequence DINECALDPDICPNGICENLRGTYKCICNSGYEVDITGKNCV. 16 disulfides stabilise this stretch: cysteine 729–cysteine 741, cysteine 736–cysteine 750, cysteine 752–cysteine 765, cysteine 771–cysteine 783, cysteine 778–cysteine 792, cysteine 794–cysteine 807, cysteine 813–cysteine 823, cysteine 818–cysteine 832, cysteine 834–cysteine 847, cysteine 855–cysteine 877, cysteine 864–cysteine 889, cysteine 878–cysteine 892, cysteine 898–cysteine 910, cysteine 916–cysteine 928, cysteine 923–cysteine 937, and cysteine 939–cysteine 952. The region spanning 767–808 is the EGF-like 12; calcium-binding domain; that stretch reads DINECVLNSLLCDNGQCRNTPGSFVCTCPKGFVYKPDLKTCE. In terms of domain architecture, EGF-like 13; calcium-binding spans 809-848; the sequence is DIDECESSPCINGVCKNSPGSFICECSPESTLDPTKTICI. Residues 853–904 enclose the TB 4 domain; it reads GTCWQTVIDGRCEININGATLKSECCSSLGAAWGSPCTICQLDPICGKGFSR. Residues 862–887 are hybrid domain 2; the sequence is GRCEININGATLKSECCSSLGAAWGS. Residues 912–953 enclose the EGF-like 14; calcium-binding domain; it reads DINECEVFPGVCKNGLCVNSRGSFKCECPNGMTLDATGRICL. The region spanning 958–1010 is the TB 5 domain; it reads ETCFLKYDDEECTLPIAGRHRMDACCCSVGAAWGTEECEECPLRNSREYEELC. One can recognise an EGF-like 15; calcium-binding domain in the interval 1030–1071; the sequence is DINECKMIPSLCTHGKCRNTIGSFKCRCDSGFALDSEERNCT. Intrachain disulfides connect cysteine 1034/cysteine 1046, cysteine 1041/cysteine 1055, cysteine 1057/cysteine 1070, cysteine 1076/cysteine 1088, cysteine 1083/cysteine 1097, cysteine 1099/cysteine 1113, cysteine 1119/cysteine 1131, cysteine 1126/cysteine 1140, cysteine 1142/cysteine 1155, cysteine 1161/cysteine 1173, cysteine 1168/cysteine 1182, cysteine 1184/cysteine 1197, cysteine 1203/cysteine 1214, cysteine 1210/cysteine 1223, cysteine 1225/cysteine 1238, cysteine 1244/cysteine 1256, cysteine 1251/cysteine 1265, cysteine 1267/cysteine 1280, cysteine 1286/cysteine 1298, cysteine 1293/cysteine 1307, cysteine 1309/cysteine 1322, cysteine 1328/cysteine 1341, cysteine 1335/cysteine 1350, cysteine 1352/cysteine 1363, cysteine 1369/cysteine 1382, cysteine 1376/cysteine 1391, cysteine 1393/cysteine 1404, cysteine 1410/cysteine 1422, cysteine 1417/cysteine 1431, cysteine 1433/cysteine 1446, cysteine 1452/cysteine 1463, cysteine 1458/cysteine 1472, cysteine 1474/cysteine 1487, cysteine 1493/cysteine 1504, cysteine 1499/cysteine 1513, cysteine 1515/cysteine 1528, cysteine 1536/cysteine 1564, cysteine 1551/cysteine 1576, cysteine 1565/cysteine 1579, cysteine 1566/cysteine 1591, cysteine 1612/cysteine 1624, cysteine 1619/cysteine 1633, cysteine 1635/cysteine 1648, cysteine 1654/cysteine 1665, cysteine 1660/cysteine 1674, and cysteine 1676/cysteine 1689. Asparagine 1069 carries an N-linked (GlcNAc...) asparagine glycan. Positions 1072–1114 constitute an EGF-like 16; calcium-binding domain; sequence DIDECRISPDLCGRGQCVNTPGDFECKCDEGYESGFMMMKNCM. The 42-residue stretch at 1115–1156 folds into the EGF-like 17; calcium-binding domain; that stretch reads DIDECQRDPLLCRGGICHNTEGSYRCECPPGHQLSPNISACI. O-linked (Glc) serine glycosylation occurs at serine 1137. Asparagine 1151 carries an N-linked (GlcNAc...) asparagine glycan. Positions 1157 to 1198 constitute an EGF-like 18; calcium-binding domain; it reads DINECELSANLCPHGRCVNLIGKYQCACNPGYHPTHDRLFCV. Positions 1199–1239 constitute an EGF-like 19; calcium-binding domain; sequence DIDECSIMNGGCETFCTNSDGSYECSCQPGFALMPDQRSCT. Residue serine 1220 is glycosylated (O-linked (Glc) serine). An EGF-like 20; calcium-binding domain is found at 1240–1281; sequence DIDECEDNPNICDGGQCTNIPGEYRCLCYDGFMASEDMKTCV. An EGF-like 21; calcium-binding domain is found at 1282-1323; that stretch reads DVNECDLNPNICLSGTCENTKGSFICHCDMGYSGKKGKTGCT. An O-linked (Glc) serine glycan is attached at serine 1304. Residues 1324 to 1364 enclose the EGF-like 22; calcium-binding domain; sequence DINECEIGAHNCGRHAVCTNTAGSFKCSCSPGWIGDGIKCT. Residue serine 1347 is glycosylated (O-linked (Glc) serine). The 41-residue stretch at 1365-1405 folds into the EGF-like 23; calcium-binding domain; the sequence is DLDECSNGTHMCSQHADCKNTMGSYRCLCKDGYTGDGFTCT. Asparagine 1371 carries an N-linked (GlcNAc...) asparagine glycan. Serine 1388 is a glycosylation site (O-linked (Glc) serine). Residues 1406 to 1447 form the EGF-like 24; calcium-binding domain; that stretch reads DLDECSENLNLCGNGQCLNAPGGYRCECDMGFVPSADGKACE. Residues 1448–1488 enclose the EGF-like 25; calcium-binding domain; the sequence is DIDECSLPNICVFGTCHNLPGLFRCECEIGYELDRSGGNCT. A glycan (N-linked (GlcNAc...) asparagine) is linked at asparagine 1486. An EGF-like 26; calcium-binding domain is found at 1489 to 1529; the sequence is DVNECLDPTTCISGNCVNTPGSYTCDCPPDFELNPTRVGCV. O-linked (Glc) serine glycosylation occurs at serine 1510. Residues 1530–2733 form a C-terminal domain region; sequence DTRSGNCYLD…GYPKRGRKRR (1204 aa). Positions 1534-1591 constitute a TB 6 domain; that stretch reads GNCYLDIRPRGDNGDTACSNEIGVGVSKASCCCSLGKAWGTPCELCPSVNTSEYKILC. The Cell attachment site signature appears at 1543–1545; sequence RGD. Asparagine 1583 carries N-linked (GlcNAc...) asparagine glycosylation. The EGF-like 27; calcium-binding domain maps to 1608–1649; that stretch reads DIDECQELPGLCQGGKCINTFGSFQCRCPTGYYLNEDTRVCD. O-linked (Glc) serine glycosylation occurs at serine 1630. Residues 1650 to 1690 enclose the EGF-like 28; calcium-binding domain; the sequence is DVNECETPGICGPGTCYNTVGNYTCICPPDYMQVNGGNNCM. Asparagine 1671 is a glycosylation site (N-linked (GlcNAc...) asparagine). A TB 7 domain is found at 1695–1750; the sequence is SLCYRNYYADNQTCDGELLFNMTKKMCCCSYNIGRAWNKPCEQCPIPSTDEFATLC. Residues asparagine 1705 and asparagine 1715 are each glycosylated (N-linked (GlcNAc...) asparagine). Residues 1768 to 1809 enclose the EGF-like 29; calcium-binding domain; it reads DIDECREIPGVCENGVCINMVGSFRCECPVGFFYNDKLLVCE. 40 disulfide bridges follow: cysteine 1772-cysteine 1784, cysteine 1779-cysteine 1793, cysteine 1795-cysteine 1808, cysteine 1814-cysteine 1826, cysteine 1820-cysteine 1835, cysteine 1837-cysteine 1849, cysteine 1855-cysteine 1867, cysteine 1862-cysteine 1876, cysteine 1878-cysteine 1891, cysteine 1897-cysteine 1907, cysteine 1902-cysteine 1916, cysteine 1918-cysteine 1930, cysteine 1936-cysteine 1949, cysteine 1944-cysteine 1958, cysteine 1960-cysteine 1973, cysteine 1979-cysteine 1991, cysteine 1986-cysteine 2000, cysteine 2002-cysteine 2013, cysteine 2019-cysteine 2031, cysteine 2026-cysteine 2040, cysteine 2042-cysteine 2055, cysteine 2063-cysteine 2085, cysteine 2072-cysteine 2098, cysteine 2086-cysteine 2101, cysteine 2087-cysteine 2113, cysteine 2133-cysteine 2144, cysteine 2139-cysteine 2153, cysteine 2155-cysteine 2166, cysteine 2172-cysteine 2183, cysteine 2178-cysteine 2192, cysteine 2194-cysteine 2206, cysteine 2212-cysteine 2223, cysteine 2219-cysteine 2232, cysteine 2234-cysteine 2247, cysteine 2253-cysteine 2267, cysteine 2260-cysteine 2276, cysteine 2278-cysteine 2291, cysteine 2297-cysteine 2309, cysteine 2304-cysteine 2318, and cysteine 2320-cysteine 2333. Residues 1810–1850 form the EGF-like 30; calcium-binding domain; that stretch reads DIDECQNGPVCQRNAECINTAGSYRCDCKPGYRLTSTGQCN. Serine 1832 is a glycosylation site (O-linked (Glc) serine). The EGF-like 31; calcium-binding domain occupies 1851-1892; that stretch reads DRNECQEIPNICSHGQCIDTVGSFYCLCHTGFKTNVDQTMCL. Residue serine 1873 is glycosylated (O-linked (Glc) serine). The EGF-like 32; calcium-binding domain occupies 1893–1931; the sequence is DINECERDACGNGTCRNTIGSFNCRCNHGFILSHNNDCI. An N-linked (GlcNAc...) asparagine glycan is attached at asparagine 1904. An O-linked (Glc) serine glycan is attached at serine 1913. Residues 1932–1974 form the EGF-like 33; calcium-binding domain; that stretch reads DVDECATGNGNLCRNGQCVNTVGSFQCRCNEGYEVAPDGRTCV. An O-linked (Glc) serine glycan is attached at serine 1955. The EGF-like 34; calcium-binding domain occupies 1975-2014; sequence DINECVLDPGKCAPGTCQNLDGSYRCICPPGYSLQNDKCE. The EGF-like 35; calcium-binding domain occupies 2015-2056; it reads DIDECVEEPEICALGTCSNTEGSFKCLCPEGFSLSSTGRRCQ. The O-linked (Glc) serine glycan is linked to serine 2037. The region spanning 2061-2113 is the TB 8 domain; the sequence is SYCYAKFEGGKCSSPKSRNHSKQECCCALKGEGWGDPCELCPTEPDEAFRQIC. The N-linked (GlcNAc...) asparagine glycan is linked to asparagine 2079. One can recognise an EGF-like 36; calcium-binding domain in the interval 2129–2167; sequence DMDECKEPDVCRHGQCINTDGSYRCECPFGYILEGNECV. A glycan (O-linked (Glc) serine) is linked at serine 2150. The region spanning 2168–2207 is the EGF-like 37; calcium-binding domain; sequence DTDECSVGNPCGNGTCKNVIGGFECTCEEGFEPGPMMTCE. Residue asparagine 2180 is glycosylated (N-linked (GlcNAc...) asparagine). One can recognise an EGF-like 38; calcium-binding domain in the interval 2208-2248; sequence DINECAQNPLLCAFRCVNTYGSYECKCPVGYVLREDRRMCK. A glycan (O-linked (Glc) serine) is linked at serine 2229. The 44-residue stretch at 2249-2292 folds into the EGF-like 39; calcium-binding domain; that stretch reads DEDECAEGKHDCTEKQMECKNLIGTYMCICGPGYQRRPDGEGCI. Residues 2293–2334 enclose the EGF-like 40; calcium-binding domain; the sequence is DENECQTKPGICENGRCLNTLGSYTCECNDGFTASPTQDECL. Residue serine 2315 is glycosylated (O-linked (Glc) serine). The TB 9 domain occupies 2339–2392; it reads GYCFSEVLQNMCQIGSSNRNPVTKSECCCDGGRGWGPHCEICPFEGTVAYKKLC. Residues 2404–2445 enclose the EGF-like 41; calcium-binding domain; the sequence is DIDECKVIHDVCRNGECVNDRGSYHCICKTGYTPDITGTACV. 21 disulfide bridges follow: cysteine 2408–cysteine 2420, cysteine 2415–cysteine 2429, cysteine 2431–cysteine 2444, cysteine 2450–cysteine 2461, cysteine 2457–cysteine 2470, cysteine 2472–cysteine 2485, cysteine 2491–cysteine 2502, cysteine 2498–cysteine 2511, cysteine 2513–cysteine 2524, cysteine 2530–cysteine 2543, cysteine 2537–cysteine 2552, cysteine 2554–cysteine 2567, cysteine 2573–cysteine 2583, cysteine 2579–cysteine 2592, cysteine 2594–cysteine 2607, cysteine 2613–cysteine 2624, cysteine 2619–cysteine 2633, cysteine 2635–cysteine 2648, cysteine 2654–cysteine 2665, cysteine 2661–cysteine 2674, and cysteine 2676–cysteine 2688. Residues 2446–2486 enclose the EGF-like 42; calcium-binding domain; the sequence is DLNECNQAPKPCNFICKNTEGSYQCSCPKGYILQEDGRSCK. O-linked (Glc) serine glycosylation occurs at serine 2467. Positions 2487–2525 constitute an EGF-like 43; calcium-binding domain; sequence DLDECATKQHNCQFLCVNTIGGFTCKCPPGFTQHHTACI. An EGF-like 44; calcium-binding domain is found at 2526-2568; it reads DNNECTSDINLCGSKGVCQNTPGSFTCECQRGFSLDQSGASCE. Residue serine 2549 is glycosylated (O-linked (Glc) serine). An EGF-like 45; calcium-binding domain is found at 2569-2608; it reads DVDECEGNHRCQHGCQNIIGGYRCSCPQGYLQHYQWNQCV. Positions 2609–2649 constitute an EGF-like 46; calcium-binding domain; that stretch reads DENECLSAHVCGGASCHNTLGSYKCMCPTGFQYEQFSGGCQ. Serine 2630 is a glycosylation site (O-linked (Glc) serine). The region spanning 2650 to 2689 is the EGF-like 47; calcium-binding domain; the sequence is DINECGSSQAPCSYGCSNTEGGYLCGCPPGYFRIGQGHCV. Residues serine 2704, serine 2705, and serine 2711 each carry the phosphoserine modification. Positions 2728-2747 are disordered; sequence RGRKRRSTNETDASDIQDGS. Residues asparagine 2736, asparagine 2752, and asparagine 2769 are each glycosylated (N-linked (GlcNAc...) asparagine).

It belongs to the fibrillin family. In terms of assembly, interacts with COL16A1. Interacts with integrin alpha-V/beta-3. Interacts with ADAMTS10; this interaction promotes microfibril assembly. Interacts with THSD4; this interaction promotes fibril formation. Interacts (via N-terminal domain) with FBLN2 and FBLN5. Interacts with ELN. Forms a ternary complex with ELN and FBLN2 or FBLN5 and a significant interaction with ELN seen only in the presence of FBLN2 or FBLN5. Interacts (via N-terminal domain) with LTBP2 (via C-terminal domain) in a Ca(+2)-dependent manner. Interacts (via N-terminal domain) with LTBP1 (via C-terminal domain). Interacts with integrins ITGA5:ITGB1, ITGAV:ITGB3 and ITGAV:ITGB6. Interacts (via N-terminal domain) with BMP2, BMP4, BMP7, BMP10 and GDF5. Interacts (via N-terminal domain) with MFAP2 and MFAP5. Interacts with ADAMTSL5. Interacts with MFAP4. Interacts (via N-terminal domain) with TNFSF11 in a Ca(+2)-dependent manner. Interacts (via N-terminal domain) with EFEMP2; this interaction inhibits EFEMP2 binding to LOX and ELN. Post-translationally, cleavage of N- and C-terminus by furin is required for incorporation into the extracellular matrix and assembly into microfibrils. The C-terminus, which corresponds to the Asprosin chain, was initially thought to constitute a propeptide. Fibrillin-1 and Asprosin chains are still linked together during the secretion from cells, but are subsequently separated by furin, an essential step for incorporation of Fibrillin-1 into the nascent microfibrils. Forms intermolecular disulfide bonds either with other fibrillin-1 molecules or with other components of the microfibrils. In terms of processing, O-glycosylated on serine residues by POGLUT2 and POGLUT3 which is necessary for efficient protein secretion. Strongly expressed during the first week of osteoblast differentiation. In terms of tissue distribution, secreted by white adipose tissue (at protein level).

The protein resides in the secreted. The protein localises to the extracellular space. It localises to the extracellular matrix. Its function is as follows. Structural component of the 10-12 nm diameter microfibrils of the extracellular matrix, which conveys both structural and regulatory properties to load-bearing connective tissues. Fibrillin-1-containing microfibrils provide long-term force bearing structural support. In tissues such as the lung, blood vessels and skin, microfibrils form the periphery of the elastic fiber, acting as a scaffold for the deposition of elastin. In addition, microfibrils can occur as elastin-independent networks in tissues such as the ciliary zonule, tendon, cornea and glomerulus where they provide tensile strength and have anchoring roles. Fibrillin-1 also plays a key role in tissue homeostasis through specific interactions with growth factors, such as the bone morphogenetic proteins (BMPs), growth and differentiation factors (GDFs) and latent transforming growth factor-beta-binding proteins (LTBPs), cell-surface integrins and other extracellular matrix protein and proteoglycan components. Regulates osteoblast maturation by controlling TGF-beta bioavailability and calibrating TGF-beta and BMP levels, respectively. Negatively regulates osteoclastogenesis by binding and sequestering an osteoclast differentiation and activation factor TNFSF11. This leads to disruption of TNFSF11-induced Ca(2+) signaling and impairment of TNFSF11-mediated nuclear translocation and activation of transcription factor NFATC1 which regulates genes important for osteoclast differentiation and function. Mediates cell adhesion via its binding to cell surface receptors integrins ITGAV:ITGB3 and ITGA5:ITGB1. Binds heparin and this interaction plays an important role in the assembly of microfibrils. Adipokine secreted by white adipose tissue that plays an important regulatory role in the glucose metabolism of liver, muscle and pancreas. Hormone that targets the liver in response to fasting to increase plasma glucose levels. Binds the olfactory receptor Olfr734 at the surface of hepatocytes and promotes hepatocyte glucose release by activating the protein kinase A activity in the liver, resulting in rapid glucose release into the circulation. May act as a regulator of adaptive thermogenesis by inhibiting browning and energy consumption, while increasing lipid deposition in white adipose tissue. Also acts as an orexigenic hormone that increases appetite: crosses the blood brain barrier and exerts effects on the hypothalamus. In the arcuate nucleus of the hypothalamus, asprosin directly activates orexigenic AgRP neurons and indirectly inhibits anorexigenic POMC neurons, resulting in appetite stimulation. Activates orexigenic AgRP neurons via binding to the olfactory receptor Olfr734. May also play a role in sperm motility in testis via interaction with Olfr734 receptor. In Mus musculus (Mouse), this protein is Fibrillin-1.